The primary structure comprises 156 residues: MNMNATILGQAIAFILFVWFCMKYVWPPLMAAIEKRQKEIADGLASAERAKKDLDLAQANATDQLKKAKAEAQVIIEQANKRRSQILDEAKAEAEQERTKIVAQAQAEIDAERKRAREELRKQVAILAVAGAEKIIERSVDEAANSDIVDKLVAEL.

Residues 11-31 traverse the membrane as a helical segment; it reads AIAFILFVWFCMKYVWPPLMA.

The protein belongs to the ATPase B chain family. F-type ATPases have 2 components, F(1) - the catalytic core - and F(0) - the membrane proton channel. F(1) has five subunits: alpha(3), beta(3), gamma(1), delta(1), epsilon(1). F(0) has three main subunits: a(1), b(2) and c(10-14). The alpha and beta chains form an alternating ring which encloses part of the gamma chain. F(1) is attached to F(0) by a central stalk formed by the gamma and epsilon chains, while a peripheral stalk is formed by the delta and b chains.

Its subcellular location is the cell inner membrane. Functionally, f(1)F(0) ATP synthase produces ATP from ADP in the presence of a proton or sodium gradient. F-type ATPases consist of two structural domains, F(1) containing the extramembraneous catalytic core and F(0) containing the membrane proton channel, linked together by a central stalk and a peripheral stalk. During catalysis, ATP synthesis in the catalytic domain of F(1) is coupled via a rotary mechanism of the central stalk subunits to proton translocation. Its function is as follows. Component of the F(0) channel, it forms part of the peripheral stalk, linking F(1) to F(0). The sequence is that of ATP synthase subunit b from Enterobacter sp. (strain 638).